The primary structure comprises 276 residues: Rhomboid protease GlpG (276 aa).

6 helical membrane-spanning segments follow: residues 94–114 (GPFT…QNLL), 142–162 (AFMH…WYLG), 169–189 (IGSG…GFVQ), 192–212 (FSGP…GYVW), 229–249 (LILF…GMAI), and 252–272 (GAHV…TLHG). Ser-201 functions as the Nucleophile in the catalytic mechanism. His-254 is an active-site residue.

It belongs to the peptidase S54 family.

It is found in the cell inner membrane. The enzyme catalyses Cleaves type-1 transmembrane domains using a catalytic dyad composed of serine and histidine that are contributed by different transmembrane domains.. Its function is as follows. Rhomboid-type serine protease that catalyzes intramembrane proteolysis. The protein is Rhomboid protease GlpG of Klebsiella pneumoniae subsp. pneumoniae (strain ATCC 700721 / MGH 78578).